Consider the following 298-residue polypeptide: Methylsterol monooxygenase 1-1 (298 aa).

3 helical membrane passes run 42-62, 96-116, and 118-138; these read ILFL…VELA, FILV…MIEI, and SGLP…YFLI. The region spanning 132–267 is the Fatty acid hydroxylase domain; sequence LVVYFLIEDY…FTYCDYIYGT (136 aa). A Histidine box-1 motif is present at residues 147–151; that stretch reads HRFFH. The Histidine box-2 motif lies at 160–164; the sequence is HRVHH. Residues 189-209 traverse the membrane as a helical segment; it reads TFMGPAIAPGHMITFWLWIAL. Positions 239–245 match the Histidine box-3 motif; the sequence is YHDYHHY.

It belongs to the sterol desaturase family. Interacts with ACBP1. Fe cation serves as cofactor. In terms of tissue distribution, expressed in rosettes, stems, roots, floral buds, flowers and siliques.

The protein localises to the endoplasmic reticulum membrane. The catalysed reaction is 4,4-dimethyl-5alpha-cholest-7-en-3beta-ol + 6 Fe(II)-[cytochrome b5] + 3 O2 + 5 H(+) = 4alpha-carboxy-4beta-methyl-5alpha-cholest-7-ene-3beta-ol + 6 Fe(III)-[cytochrome b5] + 4 H2O. It carries out the reaction 24-methylenecycloartanol + 6 Fe(II)-[cytochrome b5] + 3 O2 + 5 H(+) = 4alpha-carboxy-4beta,14alpha-dimethyl-9beta,19-cyclo-5alpha-ergost-24(24(1))-en-3beta-ol + 6 Fe(III)-[cytochrome b5] + 4 H2O. In terms of biological role, non-heme iron oxygenase involved in sterols biosynthesis by catalyzing the removal of the first methyl group at the C-4 position. 4,4-dimethyl-9-beta,19-cyclopropylsterols such as 24-methylenecycloartanol are the preferred substrates. Acts as a rate-limiting enzyme in the sterol pathway via interaction with ACBP1; sterols serve as lipid modulators for gene expression of homeodomain-leucine zipper IV transcription factors. Together with SMO1-2, involved in the maintenance of sterol composition to balance auxin and cytokinin activities during embryogenesis. The chain is Methylsterol monooxygenase 1-1 from Arabidopsis thaliana (Mouse-ear cress).